The primary structure comprises 110 residues: Large ribosomal subunit protein P2 (110 aa).

S59 bears the O-(pantetheine 4'-phosphoryl)serine; in acyl carrier protein form mark. Positions 62-110 (LASVPSGGAAPAAAAGGAAAGGAAEEKAEDKPAEKDEESDDDMGFGLFD) are disordered. The span at 63–84 (ASVPSGGAAPAAAAGGAAAGGA) shows a compositional bias: low complexity. Over residues 85 to 95 (AEEKAEDKPAE) the composition is skewed to basic and acidic residues. A Phosphoserine; in ribosomal stalk form modification is found at S100.

It belongs to the eukaryotic ribosomal protein P1/P2 family. As to quaternary structure, the phosphorylated form is part of the ribosomal stalk involved in the interaction of the elongation factors with the ribosome during protein synthesis. The phosphopantetheinylated form is part of the 10S triacylglycerol biosynthetic complex involved in de novo fatty acid biosynthesis. In terms of processing, 4'-phosphopantetheine is transferred from CoA to a specific serine by acpS. This modification is essential for activity because fatty acids are bound in thioester linkage to the sulfhydryl of the prosthetic group.

The protein localises to the cytoplasm. Functionally, probable bifunctional protein. The phosphorylated protein plays an important role in the elongation step of protein synthesis. The phosphopantetheinylated protein acts as an acyl carrier protein. In Rhodotorula glutinis (Yeast), this protein is Large ribosomal subunit protein P2.